A 179-amino-acid chain; its full sequence is Large ribosomal subunit protein uL5 (179 aa).

This sequence belongs to the universal ribosomal protein uL5 family. As to quaternary structure, part of the 50S ribosomal subunit; part of the 5S rRNA/L5/L18/L25 subcomplex. Contacts the 5S rRNA and the P site tRNA. Forms a bridge to the 30S subunit in the 70S ribosome.

In terms of biological role, this is one of the proteins that bind and probably mediate the attachment of the 5S RNA into the large ribosomal subunit, where it forms part of the central protuberance. In the 70S ribosome it contacts protein S13 of the 30S subunit (bridge B1b), connecting the 2 subunits; this bridge is implicated in subunit movement. Contacts the P site tRNA; the 5S rRNA and some of its associated proteins might help stabilize positioning of ribosome-bound tRNAs. The protein is Large ribosomal subunit protein uL5 of Prochlorococcus marinus (strain NATL2A).